We begin with the raw amino-acid sequence, 364 residues long: Anthranilate phosphoribosyltransferase 1 (364 aa).

5-phospho-alpha-D-ribose 1-diphosphate contacts are provided by residues G102, 105 to 106, T110, 112 to 115, 130 to 138, and S142; these read GD, NIST, and KHGNRSASS. G102 is a binding site for anthranilate. S114 serves as a coordination point for Mg(2+). N133 is an anthranilate binding site. R188 serves as a coordination point for anthranilate. D247 and E248 together coordinate Mg(2+).

It belongs to the anthranilate phosphoribosyltransferase family. Homodimer. Mg(2+) is required as a cofactor.

The catalysed reaction is N-(5-phospho-beta-D-ribosyl)anthranilate + diphosphate = 5-phospho-alpha-D-ribose 1-diphosphate + anthranilate. It participates in amino-acid biosynthesis; L-tryptophan biosynthesis; L-tryptophan from chorismate: step 2/5. In terms of biological role, catalyzes the transfer of the phosphoribosyl group of 5-phosphorylribose-1-pyrophosphate (PRPP) to anthranilate to yield N-(5'-phosphoribosyl)-anthranilate (PRA). The protein is Anthranilate phosphoribosyltransferase 1 of Nostoc sp. (strain PCC 7120 / SAG 25.82 / UTEX 2576).